A 489-amino-acid polypeptide reads, in one-letter code: MNSTPIEEARSLLNPSNAPTRYAERSVGPFSLAAIWFAMAIQVAIFIAAGQMTSSFQVWQVIVAIAAGCTIAVILLFFTQSAAIRWGINFTVAARMPFGIRGSLIPITLKALLSLFWFGFQTWLGALALDEITRLLTGFTNLPLWIVIFGAIQVVTTFYGITFIRWMNVFASPVLLAMGVYMVYLMLDGADVSLGEVMSMGGENPGMPFSTAIMIFVGGWIAVVVSIHDIVKECKVDPNASREGQTKADARYATAQWLGMVPASIIFGFIGAASMVLVGEWNPVIAITEVVGGVSIPMAILFQVFVLLATWSTNPAANLLSPAYTLCSTFPRVFTFKTGVIVSAVVGLLMMPWQFAGVLNTFLNLLASALGPLAGIMISDYFLVRRRRISLHDLYRTKGIYTYWRGVNWVALAVYAVALAVSFLTPDLMFVTGLIAALLLHIPAMRWVAKTFPLFSEAESRNEDYLRPIGPVAPADESATANTKEQNQR.

12 consecutive transmembrane segments (helical) span residues F30–G50, V58–F78, L104–L124, L144–I164, M167–L187, M207–I227, L258–V278, A299–S321, G339–L359, F362–F382, R405–L424, and L428–M445. The Na(+) site is built by A38 and I41. Q121 contributes to the substrate binding site. G219 is a binding site for substrate. Positions 309, 312, and 313 each coordinate Na(+). N318 serves as a coordination point for substrate. The interval P468–R489 is disordered. Residues A479–R489 show a composition bias toward polar residues.

The protein belongs to the purine-cytosine permease (2.A.39) family.

It localises to the membrane. Its activity is regulated as follows. Inhibited by dinitrophenol, 5-(2-naphthylmethyl)-D-hydantoin (D-NMH), 5-(2-naphthylmethyl)-L-hydantoin (L-NMH), 5-bromovinylhydantoin (BVH) and 5-indolylmethyl-L-hydantoin (L-IMH). The affinity of benzyl-hydantoin is increased over 10-fold in the presence of 15 mM of sodium. Nucleobase-proton symporter that mediates the sodium-dependent binding and uptake of 5-aryl-substituted hydantoin compounds. 5-indolyl methyl hydantoin and 5-benzyl hydantoin are the preferred substrates, with selectivity for a hydrophobic substituent in position 5 of hydantoin and for the L isomer over the D isomer. This Microbacterium maritypicum (Microbacterium liquefaciens) protein is Hydantoin permease.